Here is a 309-residue protein sequence, read N- to C-terminus: Ribonuclease Z (309 aa).

Zn(2+)-binding residues include histidine 63, histidine 65, aspartate 67, histidine 68, histidine 145, aspartate 216, and histidine 274. Aspartate 67 functions as the Proton acceptor in the catalytic mechanism.

The protein belongs to the RNase Z family. As to quaternary structure, homodimer. Zn(2+) serves as cofactor.

It catalyses the reaction Endonucleolytic cleavage of RNA, removing extra 3' nucleotides from tRNA precursor, generating 3' termini of tRNAs. A 3'-hydroxy group is left at the tRNA terminus and a 5'-phosphoryl group is left at the trailer molecule.. Its function is as follows. Zinc phosphodiesterase, which displays some tRNA 3'-processing endonuclease activity. Probably involved in tRNA maturation, by removing a 3'-trailer from precursor tRNA. The protein is Ribonuclease Z of Streptococcus pneumoniae (strain 70585).